Reading from the N-terminus, the 141-residue chain is Large ribosomal subunit protein uL11 (141 aa).

Belongs to the universal ribosomal protein uL11 family. Part of the ribosomal stalk of the 50S ribosomal subunit. Interacts with L10 and the large rRNA to form the base of the stalk. L10 forms an elongated spine to which L12 dimers bind in a sequential fashion forming a multimeric L10(L12)X complex. One or more lysine residues are methylated.

Its function is as follows. Forms part of the ribosomal stalk which helps the ribosome interact with GTP-bound translation factors. In Syntrophomonas wolfei subsp. wolfei (strain DSM 2245B / Goettingen), this protein is Large ribosomal subunit protein uL11.